The chain runs to 500 residues: ATP synthase subunit alpha (500 aa).

169–176 (GDRQTGKT) contacts ATP.

Belongs to the ATPase alpha/beta chains family. In terms of assembly, F-type ATPases have 2 components, CF(1) - the catalytic core - and CF(0) - the membrane proton channel. CF(1) has five subunits: alpha(3), beta(3), gamma(1), delta(1), epsilon(1). CF(0) has three main subunits: a(1), b(2) and c(9-12). The alpha and beta chains form an alternating ring which encloses part of the gamma chain. CF(1) is attached to CF(0) by a central stalk formed by the gamma and epsilon chains, while a peripheral stalk is formed by the delta and b chains.

The protein resides in the cell membrane. It carries out the reaction ATP + H2O + 4 H(+)(in) = ADP + phosphate + 5 H(+)(out). Its function is as follows. Produces ATP from ADP in the presence of a proton gradient across the membrane. The alpha chain is a regulatory subunit. The protein is ATP synthase subunit alpha of Lactococcus lactis subsp. cremoris (strain SK11).